The sequence spans 290 residues: Lysine export transcriptional regulatory protein LysG (290 aa).

The HTH lysR-type domain maps to 1 to 57; that stretch reads MNPIQLDTLLSIIDEGSFEGASLALSISPSAVSQRVKALEHHVGRVLVSRTQPAKAT. Residues 18 to 37 constitute a DNA-binding region (H-T-H motif); that stretch reads FEGASLALSISPSAVSQRVK.

This sequence belongs to the LysR transcriptional regulatory family.

Positively regulates the expression of the exporter LysE. Induction requires the presence of a coinducer, which is either intracellular L-lysine, L-arginine or L-citrulline. L-histidine also acts as a coinducer of lysE expression, but this amino acid is not exported by LysE. The lysEG system prevents bacteriostasis due to elevated L-lysine or L-arginine concentrations that arise during growth in the presence of peptides or in mutants possessing a deregulated biosynthesis pathway. The sequence is that of Lysine export transcriptional regulatory protein LysG from Corynebacterium glutamicum (strain ATCC 13032 / DSM 20300 / JCM 1318 / BCRC 11384 / CCUG 27702 / LMG 3730 / NBRC 12168 / NCIMB 10025 / NRRL B-2784 / 534).